Here is a 514-residue protein sequence, read N- to C-terminus: 2-isopropylmalate synthase (514 aa).

The Pyruvate carboxyltransferase domain occupies 5-267; that stretch reads LIIFDTTLRD…HTDIETREIV (263 aa). Positions 14, 202, 204, and 238 each coordinate Mn(2+). Residues 393–514 form a regulatory domain region; it reads KLVALRVCSE…QRTHPQVGDV (122 aa).

The protein belongs to the alpha-IPM synthase/homocitrate synthase family. LeuA type 1 subfamily. Homodimer. Mn(2+) serves as cofactor.

The protein localises to the cytoplasm. It carries out the reaction 3-methyl-2-oxobutanoate + acetyl-CoA + H2O = (2S)-2-isopropylmalate + CoA + H(+). It participates in amino-acid biosynthesis; L-leucine biosynthesis; L-leucine from 3-methyl-2-oxobutanoate: step 1/4. In terms of biological role, catalyzes the condensation of the acetyl group of acetyl-CoA with 3-methyl-2-oxobutanoate (2-ketoisovalerate) to form 3-carboxy-3-hydroxy-4-methylpentanoate (2-isopropylmalate). This Methylococcus capsulatus (strain ATCC 33009 / NCIMB 11132 / Bath) protein is 2-isopropylmalate synthase.